The sequence spans 212 residues: Large ribosomal subunit protein uL3 (212 aa).

The disordered stretch occupies residues 134 to 155 (RNSHGNSLSHRAPGSIGQNQSP). Gln153 bears the N5-methylglutamine mark.

This sequence belongs to the universal ribosomal protein uL3 family. Part of the 50S ribosomal subunit. Forms a cluster with proteins L14 and L19. Methylated by PrmB.

One of the primary rRNA binding proteins, it binds directly near the 3'-end of the 23S rRNA, where it nucleates assembly of the 50S subunit. This is Large ribosomal subunit protein uL3 from Pseudoalteromonas atlantica (strain T6c / ATCC BAA-1087).